The chain runs to 89 residues: Small ribosomal subunit protein uS17 (89 aa).

This sequence belongs to the universal ribosomal protein uS17 family. As to quaternary structure, part of the 30S ribosomal subunit.

Its function is as follows. One of the primary rRNA binding proteins, it binds specifically to the 5'-end of 16S ribosomal RNA. The sequence is that of Small ribosomal subunit protein uS17 from Polaromonas naphthalenivorans (strain CJ2).